The primary structure comprises 149 residues: Calmodulin (149 aa).

Ala-2 is modified (N-acetylalanine). EF-hand domains lie at 8 to 43 (EQIA…LGQN), 44 to 79 (PTEA…KMKD), 81 to 116 (DSEE…LGEK), and 117 to 149 (LTDE…MTSK). Residues Asp-21, Asp-23, Asp-25, Thr-27, Glu-32, Asp-57, Asp-59, Asp-61, Thr-63, Glu-68, Asp-94, Asp-96, Asn-98, and Glu-105 each contribute to the Ca(2+) site. Position 116 is an N6,N6,N6-trimethyllysine (Lys-116). Asp-130, Asp-132, Asp-134, Gln-136, and Glu-141 together coordinate Ca(2+).

The protein belongs to the calmodulin family.

Functionally, calmodulin mediates the control of a large number of enzymes, ion channels and other proteins by Ca(2+). Among the enzymes to be stimulated by the calmodulin-Ca(2+) complex are a number of protein kinases and phosphatases. The chain is Calmodulin from Pyuridae sp. (Sea squirt).